Consider the following 223-residue polypeptide: Cytidylate kinase (223 aa).

Position 10-18 (Gly10–Ser18) interacts with ATP.

The protein belongs to the cytidylate kinase family. Type 1 subfamily.

It is found in the cytoplasm. The catalysed reaction is CMP + ATP = CDP + ADP. It catalyses the reaction dCMP + ATP = dCDP + ADP. In Mycobacterium leprae (strain Br4923), this protein is Cytidylate kinase.